The sequence spans 454 residues: Immediate-early protein ICP-46 homolog (454 aa).

Residues 330-357 adopt a coiled-coil conformation; the sequence is EKDIETIEKYEKTIQELIVELHNLYLKR. The segment at 428–454 is disordered; that stretch reads SSPTASLSSLSPPSSNNNSPIRSPIRM.

It belongs to the IIV-6 393L family.

This Invertebrate iridescent virus 6 (IIV-6) protein is Immediate-early protein ICP-46 homolog.